A 561-amino-acid chain; its full sequence is Putative transport protein DNO_0009 (561 aa).

A run of 5 helical transmembrane segments spans residues Val4–Ile24, Val29–Leu49, Phe74–Ser94, Ala104–Phe124, and Met166–Ile186. 2 consecutive RCK C-terminal domains span residues Leu198 to Glu283 and Ala285 to Asn369. Helical transmembrane passes span Met379–Leu399, Ala411–Phe433, Ile447–Leu467, Phe472–Ile492, Tyr501–Ala521, and Val538–Trp558.

It belongs to the AAE transporter (TC 2.A.81) family. YidE subfamily.

The protein localises to the cell membrane. The sequence is that of Putative transport protein DNO_0009 from Dichelobacter nodosus (strain VCS1703A).